Consider the following 113-residue polypeptide: Nucleoid-associated protein CLJ_B0037 (113 aa).

Over residues 93 to 102 (EEDTSSEVKR) the composition is skewed to basic and acidic residues. A disordered region spans residues 93–113 (EEDTSSEVKRLTGGMNLPGMF).

This sequence belongs to the YbaB/EbfC family. Homodimer.

It localises to the cytoplasm. Its subcellular location is the nucleoid. Its function is as follows. Binds to DNA and alters its conformation. May be involved in regulation of gene expression, nucleoid organization and DNA protection. This is Nucleoid-associated protein CLJ_B0037 from Clostridium botulinum (strain 657 / Type Ba4).